The chain runs to 329 residues: DNA-directed RNA polymerase subunit alpha (329 aa).

Positions 1–235 are alpha N-terminal domain (alpha-NTD); that stretch reads MVREKVKVST…DLFIPFLHTE (235 aa). Residues 269 to 329 form an alpha C-terminal domain (alpha-CTD) region; it reads IALKYIFIDQ…KQILGILEKK (61 aa).

It belongs to the RNA polymerase alpha chain family. In plastids the minimal PEP RNA polymerase catalytic core is composed of four subunits: alpha, beta, beta', and beta''. When a (nuclear-encoded) sigma factor is associated with the core the holoenzyme is formed, which can initiate transcription.

The protein localises to the plastid. It is found in the chloroplast. It carries out the reaction RNA(n) + a ribonucleoside 5'-triphosphate = RNA(n+1) + diphosphate. In terms of biological role, DNA-dependent RNA polymerase catalyzes the transcription of DNA into RNA using the four ribonucleoside triphosphates as substrates. In Gossypium hirsutum (Upland cotton), this protein is DNA-directed RNA polymerase subunit alpha.